The sequence spans 237 residues: U2 small nuclear ribonucleoprotein A' (237 aa).

3 LRR repeats span residues arginine 53 to aspartate 74, threonine 75 to proline 95, and tyrosine 97 to arginine 118. An LRRCT domain is found at asparagine 132 to asparagine 170. A disordered region spans residues glutamine 161–proline 182.

Belongs to the U2 small nuclear ribonucleoprotein A family. As to quaternary structure, associated with the spliceosome.

The protein localises to the nucleus. Involved in pre-mRNA splicing. The chain is U2 small nuclear ribonucleoprotein A' (LEA1) from Eremothecium gossypii (strain ATCC 10895 / CBS 109.51 / FGSC 9923 / NRRL Y-1056) (Yeast).